A 677-amino-acid polypeptide reads, in one-letter code: Methionine--tRNA ligase (677 aa).

The 'HIGH' region motif lies at Pro-15–His-25. Cys-146, Cys-149, Cys-159, and Cys-162 together coordinate Zn(2+). The 'KMSKS' region signature appears at Lys-333–Ser-337. An ATP-binding site is contributed by Lys-336. Positions Asp-575–Lys-677 constitute a tRNA-binding domain.

This sequence belongs to the class-I aminoacyl-tRNA synthetase family. MetG type 1 subfamily. As to quaternary structure, homodimer. It depends on Zn(2+) as a cofactor.

It localises to the cytoplasm. The catalysed reaction is tRNA(Met) + L-methionine + ATP = L-methionyl-tRNA(Met) + AMP + diphosphate. In terms of biological role, is required not only for elongation of protein synthesis but also for the initiation of all mRNA translation through initiator tRNA(fMet) aminoacylation. In Shigella dysenteriae serotype 1 (strain Sd197), this protein is Methionine--tRNA ligase.